A 357-amino-acid polypeptide reads, in one-letter code: Sorbitol dehydrogenase (357 aa).

Residue alanine 2 is modified to N-acetylalanine. Cysteine 45 contacts Zn(2+). Tyrosine 51 contributes to the substrate binding site. Zn(2+)-binding residues include histidine 70 and glutamate 71. Glutamate 156 lines the substrate pocket. Serine 169 carries the post-translational modification Phosphoserine. NAD(+) is bound by residues valine 184, aspartate 204, arginine 209, 273–275 (VGM), and 297–299 (VFR). Residues arginine 299 and tyrosine 300 each coordinate substrate.

This sequence belongs to the zinc-containing alcohol dehydrogenase family. In terms of assembly, homotetramer. Zn(2+) serves as cofactor. In terms of tissue distribution, testis has the highest level of expression, followed by kidney, liver, and lung. Low levels of expression are also observed in lens, brain, and skeletal muscle. Expressed in sperm flagellum and very low expression in the sperm head.

The protein resides in the mitochondrion membrane. It localises to the cell projection. It is found in the cilium. The protein localises to the flagellum. It catalyses the reaction keto-D-fructose + NADH + H(+) = D-sorbitol + NAD(+). It carries out the reaction xylitol + NAD(+) = D-xylulose + NADH + H(+). The enzyme catalyses L-iditol + NAD(+) = keto-L-sorbose + NADH + H(+). Its activity is regulated as follows. Inhibited in vitro by p-hydroxymercuribenzoate, EDTA, l,l0-phenanthroline and N-ethylmaleimide. Functionally, polyol dehydrogenase that catalyzes the reversible NAD(+)-dependent oxidation of various sugar alcohols. Is active with D-sorbitol (D-glucitol) leading to the C2-oxidized product D-fructose. Is a key enzyme in the polyol pathway that interconverts glucose and fructose via sorbitol, which constitutes an important alternate route for glucose metabolism. May play a role in sperm motility by using sorbitol as an alternative energy source for sperm motility and protein tyrosine phosphorylation. Has no activity on ethanol. Cannot use NADP(+) as the electron acceptor. The chain is Sorbitol dehydrogenase (Sord) from Mus musculus (Mouse).